The sequence spans 318 residues: Electron transfer flavoprotein subunit alpha (318 aa).

257–285 (LYIALGISGAIQHRAGMQTSKTIVAVNKD) is a binding site for FAD.

Belongs to the ETF alpha-subunit/FixB family. In terms of assembly, heterodimer of an alpha and a beta subunit. The cofactor is FAD.

In terms of biological role, the electron transfer flavoprotein serves as a specific electron acceptor for other dehydrogenases. It transfers the electrons to the main respiratory chain via ETF-ubiquinone oxidoreductase (ETF dehydrogenase). The polypeptide is Electron transfer flavoprotein subunit alpha (etfA) (Mycobacterium tuberculosis (strain CDC 1551 / Oshkosh)).